The following is a 447-amino-acid chain: Probable aspartic protease At2g35615 (447 aa).

The first 20 residues, 1–20, serve as a signal peptide directing secretion; the sequence is MATQILLCFFLFFSVTLSSS. N-linked (GlcNAc...) asparagine glycosylation occurs at Asn-25. Residues 85–439 enclose the Peptidase A1 domain; it reads FFMSITIGTP…DLETRTVSFQ (355 aa). Residue Asp-103 is part of the active site. Asn-251 is a glycosylation site (N-linked (GlcNAc...) asparagine). Asp-326 is an active-site residue.

This sequence belongs to the peptidase A1 family.

Its subcellular location is the secreted. This chain is Probable aspartic protease At2g35615, found in Arabidopsis thaliana (Mouse-ear cress).